A 170-amino-acid polypeptide reads, in one-letter code: Odorant-binding protein 2b (170 aa).

An N-terminal signal peptide occupies residues 1 to 15 (MKTLFLGVTLGLAAA). An intrachain disulfide couples C74 to C166.

It belongs to the calycin superfamily. Lipocalin family. As to expression, strongly expressed in genital sphere organs such as the prostate and mammary glands.

It localises to the secreted. Probably binds and transports small hydrophobic volatile molecules. The sequence is that of Odorant-binding protein 2b (OBP2B) from Homo sapiens (Human).